The primary structure comprises 119 residues: Large ribosomal subunit protein bL20 (119 aa).

The protein belongs to the bacterial ribosomal protein bL20 family.

Its function is as follows. Binds directly to 23S ribosomal RNA and is necessary for the in vitro assembly process of the 50S ribosomal subunit. It is not involved in the protein synthesizing functions of that subunit. The sequence is that of Large ribosomal subunit protein bL20 from Brevibacillus brevis (strain 47 / JCM 6285 / NBRC 100599).